Consider the following 185-residue polypeptide: Elongation factor P (185 aa).

This sequence belongs to the elongation factor P family.

The protein resides in the cytoplasm. Its pathway is protein biosynthesis; polypeptide chain elongation. Its function is as follows. Involved in peptide bond synthesis. Stimulates efficient translation and peptide-bond synthesis on native or reconstituted 70S ribosomes in vitro. Probably functions indirectly by altering the affinity of the ribosome for aminoacyl-tRNA, thus increasing their reactivity as acceptors for peptidyl transferase. The protein is Elongation factor P of Paraburkholderia xenovorans (strain LB400).